The primary structure comprises 385 residues: Cytochrome b (385 aa).

The next 4 helical transmembrane spans lie at 34–54 (FGSL…LLTM), 78–99 (WFIR…FIHI), 114–134 (WYSG…GYVL), and 179–199 (FLVL…IHLV). The heme b site is built by His84 and His98. Heme b contacts are provided by His183 and His197. His202 contributes to the a ubiquinone binding site. 4 helical membrane passes run 227 to 247 (FKDI…SLLL), 289 to 309 (LAGI…PILI), 321 to 341 (LMQV…WLGA), and 348 to 368 (FILM…VMFP).

This sequence belongs to the cytochrome b family. As to quaternary structure, the cytochrome bc1 complex contains 3 respiratory subunits (MT-CYB, CYC1 and UQCRFS1), 2 core proteins (UQCRC1 and UQCRC2) and probably 6 low-molecular weight proteins. It depends on heme b as a cofactor.

It localises to the mitochondrion inner membrane. Its function is as follows. Component of the ubiquinol-cytochrome c reductase complex (complex III or cytochrome b-c1 complex) that is part of the mitochondrial respiratory chain. The b-c1 complex mediates electron transfer from ubiquinol to cytochrome c. Contributes to the generation of a proton gradient across the mitochondrial membrane that is then used for ATP synthesis. The chain is Cytochrome b (MT-CYB) from Eptatretus burgeri (Inshore hagfish).